Here is a 388-residue protein sequence, read N- to C-terminus: Protein FAM199X (388 aa).

Residues 288–312 (SMVSSASSSGSSVGNSASNSSANMS) are compositionally biased toward low complexity. Residues 288–358 (SMVSSASSSG…QLKEQRQARK (71 aa)) form a disordered region. A phosphoserine mark is found at Ser316 and Ser321. Residues 330–349 (DSKKRSKQRKLQQKAFRKRQ) show a composition bias toward basic residues.

The protein belongs to the FAM199 family.

The chain is Protein FAM199X (Fam199x) from Mus musculus (Mouse).